Here is a 343-residue protein sequence, read N- to C-terminus: Probable dual-specificity RNA methyltransferase RlmN (343 aa).

E90 (proton acceptor) is an active-site residue. In terms of domain architecture, Radical SAM core spans 96–325; the sequence is HEGYATACIS…AEIRYEKGAD (230 aa). Cysteines 103 and 330 form a disulfide. Positions 110, 114, and 117 each coordinate [4Fe-4S] cluster. Residues 157–158, S189, 212–214, and N288 each bind S-adenosyl-L-methionine; these read GE and SLH. C330 serves as the catalytic S-methylcysteine intermediate.

This sequence belongs to the radical SAM superfamily. RlmN family. It depends on [4Fe-4S] cluster as a cofactor.

The protein resides in the cytoplasm. The catalysed reaction is adenosine(2503) in 23S rRNA + 2 reduced [2Fe-2S]-[ferredoxin] + 2 S-adenosyl-L-methionine = 2-methyladenosine(2503) in 23S rRNA + 5'-deoxyadenosine + L-methionine + 2 oxidized [2Fe-2S]-[ferredoxin] + S-adenosyl-L-homocysteine. The enzyme catalyses adenosine(37) in tRNA + 2 reduced [2Fe-2S]-[ferredoxin] + 2 S-adenosyl-L-methionine = 2-methyladenosine(37) in tRNA + 5'-deoxyadenosine + L-methionine + 2 oxidized [2Fe-2S]-[ferredoxin] + S-adenosyl-L-homocysteine. Specifically methylates position 2 of adenine 2503 in 23S rRNA and position 2 of adenine 37 in tRNAs. The sequence is that of Probable dual-specificity RNA methyltransferase RlmN from Pseudothermotoga lettingae (strain ATCC BAA-301 / DSM 14385 / NBRC 107922 / TMO) (Thermotoga lettingae).